We begin with the raw amino-acid sequence, 958 residues long: MCCLFLRLRDYSTAHALSLPPCQRCGLQPWSARSHARRTLGVRKAGEMLRQEAASLSSSPRWTPSRRDAPCGRTLASASRPSTEGAMADRSSSSSSSPAPASAPGSSFGNKRSYAIHRAASSFPVGTSSSSARDTTYPHTFRTPLSAGNPQRSGHKSWTPQVGYSATSSAVSAHAPSVIVAVVEGRGLARGEIGMASIDLKSPQIMLSQFADNTTYAKVITKLQVLSPLEIIMSNTACVVGNSTKLFTLITENFKNVNFTTVQRKYFNETKGLEYIEQLCIAEFSSVLMEVQSRYYCLAAAAALLKYVEFIQNSVYAPKSLKIYFQGSEQTAMIDSSSAQNLELLVNNQDYRSNHTLFGVLNYTKTAGGSRRLRSNILEPLVDVETISMRLDCVQELLQDEELFFGLQSVISRFLDTEQLLSVLVQIPKQDTVNAAESKITNLIYLKHTLELVEPLKVTLKNCSTPLLRAYYGSLEDHRFGLILDKIKTVINDDARYMKGCLNMRTQKCYAVRSNISEFLDIARRTYTEIVDDIAGMIAQLAEKYSLPLRTSFSSSRGFFIQMTTDCAALSSDQLPSEFIKISKVKNSYSFTSADLIKMNERCQESLREIYHMTYMIVCKLLSEIYEHIHCLYKLSDTVSMLDMLLSFAHACTLSDYVRPEFTDTLAIKQGWHPILEKISAEKPVANNTYITEGSNVLIITGPNMSGKSTYLKQIALCQIMAQIGSYVPAEYASFRIAAQIFTRISTDDDIETNSSTFMKEMKEIAYILHNANDKSLILIDELGRGTNTEEGIGISYAVCEHLLSIKAFTLFTTHFLELCHLDALYLNVENMHFEVQHVKNTSRNKDAILYTYKLSRGLTEEKNYGLKAAEASSLPSSIVLDARDITTQITRQILQNQRSSPEMDRQRAVYHLATRLVQAARNSQLEPDRLRTYLSNLKKKYAGDFPRAVGLPEKTEE.

Disordered stretches follow at residues 51 to 110 (QEAA…SFGN) and 124 to 161 (PVGT…WTPQ). The segment covering 91–107 (SSSSSSSPAPASAPGSS) has biased composition (low complexity). Polar residues-rich tracts occupy residues 124 to 138 (PVGT…TTYP) and 146 to 161 (SAGN…WTPQ). 702-709 (GPNMSGKS) contributes to the ATP binding site.

It belongs to the DNA mismatch repair MutS family. Heterooligomer of MSH4 and MSH5. As to expression, predominantly expressed in testis.

The protein localises to the chromosome. Involved in meiotic recombination. Required for reciprocal recombination and proper segregation of homologous chromosomes at meiosis. In Mus musculus (Mouse), this protein is MutS protein homolog 4 (Msh4).